The sequence spans 1045 residues: Endoglucanase B (1045 aa).

The signal sequence occupies residues methionine 1–alanine 33. The interval alanine 34 to proline 492 is catalytic. Aspartate 91 serves as the catalytic Nucleophile. Active-site residues include histidine 410, aspartate 449, and glutamate 458. A CBM3 domain is found at aspartate 493–threonine 642. 4 linker ('hinge') (Pro-Thr box) regions span residues threonine 644–proline 650, alanine 734–proline 748, alanine 831–alanine 846, and serine 931–proline 944. 3 Fibronectin type-III domains span residues threonine 653–threonine 743, threonine 751–proline 840, and valine 849–valine 940. One can recognise a CBM2 domain in the interval proline 939–glycine 1045. A disulfide bridge links cysteine 946 with cysteine 1044.

The protein belongs to the glycosyl hydrolase 9 (cellulase E) family.

The catalysed reaction is Endohydrolysis of (1-&gt;4)-beta-D-glucosidic linkages in cellulose, lichenin and cereal beta-D-glucans.. Functionally, the biological conversion of cellulose to glucose generally requires three types of hydrolytic enzymes: (1) Endoglucanases which cut internal beta-1,4-glucosidic bonds; (2) Exocellobiohydrolases that cut the disaccharide cellobiose from the non-reducing end of the cellulose polymer chain; (3) Beta-1,4-glucosidases which hydrolyze the cellobiose and other short cello-oligosaccharides to glucose. This is Endoglucanase B (cenB) from Cellulomonas fimi.